We begin with the raw amino-acid sequence, 254 residues long: Nodulation protein J (254 aa).

The next 6 helical transmembrane spans lie at 25–45 (ASVL…GVGL), 60–80 (FLAC…EMLY), 106–126 (LIGE…IVAV), 133–153 (YIPG…ALIF), 169–189 (LFAF…GVIV), and 230–250 (LLLS…VICV). The 227-residue stretch at 25–251 (ASVLGSVIDP…FISAKVICVR (227 aa)) folds into the ABC transmembrane type-2 domain.

Belongs to the ABC-2 integral membrane protein family. Lipooligosaccharide exporter (TC 3.A.1.102) subfamily. In terms of assembly, the complex is composed of two ATP-binding proteins (NodI) and two transmembrane proteins (NodJ).

The protein localises to the cell inner membrane. Part of the ABC transporter complex NodIJ involved in the export of the nodulation factors (Nod factors), the bacterial signal molecules that induce symbiosis and subsequent nodulation induction. Nod factors are LCO (lipo-chitin oligosaccharide), a modified beta-1,4-linked N-acetylglucosamine oligosaccharide. This subunit encodes the transporter. The chain is Nodulation protein J (nodJ) from Azorhizobium caulinodans (strain ATCC 43989 / DSM 5975 / JCM 20966 / LMG 6465 / NBRC 14845 / NCIMB 13405 / ORS 571).